The primary structure comprises 305 residues: Serine/threonine-protein phosphatase 6 catalytic subunit (305 aa).

4 residues coordinate Mn(2+): Asp54, His56, Asp82, and Asn114. The active-site Proton donor is His115. Positions 164 and 238 each coordinate Mn(2+).

Belongs to the PPP phosphatase family. PP-6 (PP-V) subfamily. Requires Mn(2+) as cofactor.

It catalyses the reaction O-phospho-L-seryl-[protein] + H2O = L-seryl-[protein] + phosphate. It carries out the reaction O-phospho-L-threonyl-[protein] + H2O = L-threonyl-[protein] + phosphate. The chain is Serine/threonine-protein phosphatase 6 catalytic subunit (ppp6c) from Dictyostelium discoideum (Social amoeba).